Consider the following 611-residue polypeptide: Beta-hexosaminidase (611 aa).

This sequence belongs to the glycosyl hydrolase 20 family. As to quaternary structure, homodimer.

Its subcellular location is the periplasm. The enzyme catalyses Hydrolysis of terminal non-reducing N-acetyl-D-hexosamine residues in N-acetyl-beta-D-hexosaminides.. It participates in glycan degradation; chitin degradation. Inhibited by mercuric ions, PNP-beta-Glc, PNP-beta-Gal, PNP-alpha-GlcNAc, and PNP-beta-S-GlcNAc. Functionally, hydrolyzes aryl-N-acetyl-beta-D-glucosaminide (aryl-beta-GlcNAc), aryl-beta-GalNAc and chitin oligosaccharides. Can hydrolyze rapidly the artificial substrates p-nitrophenyl-N-acetyl-beta-D-glucosaminide (PNP-beta-GlcNAc) and 4-methylumbelliferyl-beta-GlcNAc, and is slightly active on p-nitrophenyl-beta-GalNAc. This enzyme is not processive, i.e. when it hydrolyzes (GlcNAc)n, both products, (Glc-NAc)n-1 and the terminal GlcNAc, are released before the enzyme attacks a second molecule of (GlcNAc)n or (GlcNAc)n-1. This is Beta-hexosaminidase from Vibrio furnissii.